We begin with the raw amino-acid sequence, 67 residues long: MQVLVRDNNVDQALKALKKKMQREGIFREMKLRRHYEKPSERKAREAAEAVRRARKMERKRLEREGF.

Basic and acidic residues predominate over residues 37–52 (EKPSERKAREAAEAVR). Residues 37–67 (EKPSERKAREAAEAVRRARKMERKRLEREGF) form a disordered region.

The protein belongs to the bacterial ribosomal protein bS21 family.

This Gluconacetobacter diazotrophicus (strain ATCC 49037 / DSM 5601 / CCUG 37298 / CIP 103539 / LMG 7603 / PAl5) protein is Small ribosomal subunit protein bS21.